The chain runs to 273 residues: Cbp/p300-interacting transactivator 2 (273 aa).

Positions 137-204 (DLHPAAGHQM…GSGGSGSSNM (68 aa)) are disordered. A compositionally biased stretch (gly residues) spans 165-200 (STPGGSGGSSTPGGSGGSAGGGAGSSNSGGGSGGSG).

Belongs to the CITED family. As to quaternary structure, interacts (via C-terminus) with SMAD2. Interacts (via C-terminus) with SMAD3 (via MH2 domain). Interacts with LHX2 (via LIM domains). Interacts with WT1. Interacts (via C-terminus) with EP300 (via CH1 domain); the interaction is stimulated in response to hypoxia. Interacts with PPARA. Interacts (via C-terminus) with TFAP2A, TFAP2B and TFAP2C.

The protein resides in the nucleus. In terms of biological role, transcriptional coactivator of the p300/CBP-mediated transcription complex. Acts as a bridge, linking TFAP2 transcription factors and the p300/CBP transcriptional coactivator complex in order to stimulate TFAP2-mediated transcriptional activation. Positively regulates TGF-beta signaling through its association with the SMAD/p300/CBP-mediated transcriptional coactivator complex. Stimulates the peroxisome proliferator-activated receptors PPARA transcriptional activity. Enhances estrogen-dependent transactivation mediated by estrogen receptors. Also acts as a transcriptional corepressor; interferes with the binding of the transcription factors HIF1A or STAT2 and the p300/CBP transcriptional coactivator complex. Participates in sex determination and early gonad development by stimulating transcription activation of SRY. Plays a role in controlling left-right patterning during embryogenesis; potentiates transcriptional activation of NODAL-mediated gene transcription in the left lateral plate mesoderm (LPM). Plays an essential role in differentiation of the adrenal cortex from the adrenogonadal primordium (AGP); stimulates WT1-mediated transcription activation thereby up-regulating the nuclear hormone receptor NR5A1 promoter activity. Associates with chromatin to the PITX2 P1 promoter region. The chain is Cbp/p300-interacting transactivator 2 (CITED2) from Saguinus labiatus (Red-chested mustached tamarin).